The following is an 872-amino-acid chain: Serine/threonine-protein phosphatase 1 regulatory subunit 10 (872 aa).

The segment at 1–348 (MGSGPIDPKE…EPAAPAEPMD (348 aa)) is interaction with TOX4. In terms of domain architecture, TFIIS N-terminal spans 73 to 147 (KLLNSWLTYS…SDWMAVIRSQ (75 aa)). 4 disordered regions span residues 147 to 213 (QSST…STGL), 247 to 270 (SATA…NTTP), 307 to 398 (KKKK…KRKT), and 534 to 837 (VETL…HGGD). Basic and acidic residues-rich tracts occupy residues 153 to 166 (AEKD…EGKS) and 174 to 196 (PLTE…EKPK). A Glycyl lysine isopeptide (Lys-Gly) (interchain with G-Cter in SUMO2) cross-link involves residue K179. Residues 248 to 258 (ATAAPGDAAPP) are compositionally biased toward low complexity. K262 is covalently cross-linked (Glycyl lysine isopeptide (Lys-Gly) (interchain with G-Cter in SUMO2)). Position 313 is a phosphoserine (S313). Residues 325–336 (KTSTEPSTAKPS) are compositionally biased toward low complexity. The segment at 357–433 (PAVEVPELMD…NKIKDFGEAA (77 aa)) is necessary for interaction with PPP1CA. The residue at position 382 (S382) is a Phosphoserine. Residues 393 to 408 (GRKRKTVTWPEEGKLR) are necessary for interaction with PPP1CC. Positions 394–423 (RKRKTVTWPEEGKLREYFYFELDETERVNV) match the PP1-binding motif motif. T398 is subject to Phosphothreonine; by PKA. The interval 418 to 619 (TERVNVNKIK…LKQMLVPHGL (202 aa)) is interaction with WDR82. Residues 540-551 (GGSGGSPDGAGG) are compositionally biased toward gly residues. 2 positions are modified to phosphoserine: S545 and S591. The segment covering 583-595 (EILTSIMGSPNNH) has biased composition (polar residues). Over residues 596-611 (PSEELLKQPDYSDKLK) the composition is skewed to basic and acidic residues. The span at 644–655 (PPGPGGPMPGPH) shows a compositional bias: pro residues. Omega-N-methylarginine is present on R665. Residues 674–690 (RGGDPFWDGPGDPMRGG) are compositionally biased toward low complexity. An omega-N-methylarginine mark is found at R693 and R737. The segment covering 724-762 (ARGGRSGGGPPNGRGGPGGGGMVGGGGHRPHEGPGGSMG) has biased composition (gly residues). A compositionally biased stretch (basic and acidic residues) spans 795–835 (PHDVPSHRGHDHRGPPPHEHRGHDGHGGGGHRGHDGGHSHG). A C3H1-type zinc finger spans residues 838 to 866 (MSNRPVCRHFMMKGNCRYENNCAFYHPGV).

As to quaternary structure, component of the PNUTS-PP1 complex (also named PTW/PP1 complex), composed of PPP1R10/PNUTS, TOX4, WDR82, and PPP1CA (or PPP1CB or PPP1CC). Post-translationally, phosphorylated on Thr-398 by PKA within the region necessary for interaction with PPP1CA. In terms of tissue distribution, expressed in testis, brain and intestine (at protein level). Highly expressed in testis.

It localises to the nucleus. Its subcellular location is the chromosome. Substrate-recognition component of the PNUTS-PP1 protein phosphatase complex, a protein phosphatase 1 (PP1) complex that promotes RNA polymerase II transcription pause-release, allowing transcription elongation. Promoter-proximal pausing by RNA polymerase II is a transcription halt following transcription initiation but prior to elongation, which acts as a checkpoint to control that transcripts are favorably configured for transcriptional elongation. The PNUTS-PP1 complex mediates the release of RNA polymerase II from promoter-proximal region of genes by catalyzing dephosphorylation of proteins involved in transcription, such as AFF4, CDK9, MEPCE, INTS12, NCBP1, POLR2M/GDOWN1 and SUPT6H. The PNUTS-PP1 complex also regulates RNA polymerase II transcription termination by mediating dephosphorylation of SUPT5H in termination zones downstream of poly(A) sites, thereby promoting deceleration of RNA polymerase II transcription. PNUTS-PP1 complex is also involved in the response to replication stress by mediating dephosphorylation of POLR2A at 'Ser-5' of the CTD, promoting RNA polymerase II degradation. The PNUTS-PP1 complex also plays a role in the control of chromatin structure and cell cycle progression during the transition from mitosis into interphase. PNUTS-PP1 complex mediates dephosphorylation of MYC, promoting MYC stability by preventing MYC ubiquitination by the SCF(FBXW7) complex. In addition to acts as a substrate-recognition component, PPP1R10/PNUTS also acts as a nuclear targeting subunit for the PNUTS-PP1 complex. In some context, PPP1R10/PNUTS also acts as an inhibitor of protein phosphatase 1 (PP1) activity by preventing access to substrates. In Rattus norvegicus (Rat), this protein is Serine/threonine-protein phosphatase 1 regulatory subunit 10.